The chain runs to 304 residues: MNNVLDLKLKKIDKIYRPGSKVSGNVVINSKDDMSHSGVTIVVEGTVQLQLSSKSVGLFEAFYNSLKPITLMHYTISVTNGGGKFQAGITELPFEFTLEPLPNQQLYDTYHGVFVNIQYSIKCDVKRGILSKDLSKTIEFIVEVPSQNKEVLMKSTPESLITFNITPDSLVNFKKISKADVPTFKISGGLVSAICNINEAFQGHMIIESADTVIKSVELQLVRVETCGCADGYAREVTEIQNIQIADGDIWRNFKIPLYMVFPRLFTCISTAGKTFKIEFEVNLVIMLEDGHLITENFPIKLIR.

This sequence belongs to the VPS26 family. As to quaternary structure, component of the commander complex that is essential for endosomal recycling of transmembrane cargos; the commander complex is composed of the CCC subcomplex and the retriever subcomplex. Component of the heterotrimeric retriever complex consisting of vps26c, vps29 and vps35l; within the complex interacts with vps35l. Interacts with snx17 (via C-terminus); the interaction is direct and associates snx17 with the retriever complex. Interacts with snx31; the interaction is direct.

The protein resides in the endosome. Its function is as follows. Component of the commander complex that is essential for endosomal recycling of transmembrane cargos; the commander complex is composed of the CCC subcomplex and the retriever subcomplex. Component of the retriever complex, which is a heterotrimeric complex related to retromer cargo-selective complex (CSC) and essential for retromer-independent retrieval and recycling of numerous cargos such as integrin alpha-5/beta-1 (ITGA5:ITGB1). The recruitment of the retriever complex to the endosomal membrane involves CCC and WASH complexes. In the endosomes, drives the retriever and recycling of NxxY-motif-containing cargo proteins by coupling to snx17, a cargo essential for the homeostatic maintenance of numerous cell surface proteins associated with processes that include cell migration, cell adhesion, nutrient supply and cell signaling. The sequence is that of Vacuolar protein sorting-associated protein 26C (vps26c) from Dictyostelium discoideum (Social amoeba).